Reading from the N-terminus, the 57-residue chain is Bowman-Birk type proteinase inhibitor B4 (57 aa).

4 disulfides stabilise this stretch: C6–C55, C12–C17, C26–C33, and C30–C47.

It belongs to the Bowman-Birk serine protease inhibitor family. As to expression, expressed in bulb (at protein level).

Serine protease inhibitor. Inhibits trypsin (Ki = 110 nM) and very weakly inhibits chymotrypsin (Ki =1200 nM). Does not inhibit bacterial subtilisin. This Hyacinthus orientalis (Common hyacinth) protein is Bowman-Birk type proteinase inhibitor B4.